Reading from the N-terminus, the 502-residue chain is Protein nucleotidyltransferase YdiU (502 aa).

8 residues coordinate ATP: glycine 98, glycine 100, arginine 101, lysine 121, aspartate 133, glycine 134, arginine 184, and arginine 191. Aspartate 260 acts as the Proton acceptor in catalysis. Positions 261 and 270 each coordinate Mg(2+). Aspartate 270 provides a ligand contact to ATP.

It belongs to the SELO family. The cofactor is Mg(2+). It depends on Mn(2+) as a cofactor.

The enzyme catalyses L-seryl-[protein] + ATP = 3-O-(5'-adenylyl)-L-seryl-[protein] + diphosphate. The catalysed reaction is L-threonyl-[protein] + ATP = 3-O-(5'-adenylyl)-L-threonyl-[protein] + diphosphate. It carries out the reaction L-tyrosyl-[protein] + ATP = O-(5'-adenylyl)-L-tyrosyl-[protein] + diphosphate. It catalyses the reaction L-histidyl-[protein] + UTP = N(tele)-(5'-uridylyl)-L-histidyl-[protein] + diphosphate. The enzyme catalyses L-seryl-[protein] + UTP = O-(5'-uridylyl)-L-seryl-[protein] + diphosphate. The catalysed reaction is L-tyrosyl-[protein] + UTP = O-(5'-uridylyl)-L-tyrosyl-[protein] + diphosphate. Functionally, nucleotidyltransferase involved in the post-translational modification of proteins. It can catalyze the addition of adenosine monophosphate (AMP) or uridine monophosphate (UMP) to a protein, resulting in modifications known as AMPylation and UMPylation. The sequence is that of Protein nucleotidyltransferase YdiU from Rhizobium rhizogenes (strain K84 / ATCC BAA-868) (Agrobacterium radiobacter).